Consider the following 336-residue polypeptide: Octanoyltransferase (336 aa).

The span at 1–16 (MPKSALMSSSFQTSVS) shows a compositional bias: polar residues. 2 disordered regions span residues 1–22 (MPKSALMSSSFQTSVSPRPLPV) and 48–88 (QGKG…GGGR). The unknown stretch occupies residues 1 to 92 (MPKSALMSSS…AAGGGRTIRD (92 aa)). Positions 93-336 (VKEAAFDVLD…GQEALSVASP (244 aa)) are lipB domain. Positions 124–318 (VGGRPTLLLV…AFALTFADYD (195 aa)) constitute a BPL/LPL catalytic domain. Substrate contacts are provided by residues 170–177 (RGGDVTYH), 244–246 (SIG), and 257–259 (GIG). Catalysis depends on Cys275, which acts as the Acyl-thioester intermediate.

The protein in the C-terminal section; belongs to the LipB family.

Its subcellular location is the cytoplasm. It catalyses the reaction octanoyl-[ACP] + L-lysyl-[protein] = N(6)-octanoyl-L-lysyl-[protein] + holo-[ACP] + H(+). It functions in the pathway protein modification; protein lipoylation via endogenous pathway; protein N(6)-(lipoyl)lysine from octanoyl-[acyl-carrier-protein]: step 1/2. Functionally, catalyzes the transfer of endogenously produced octanoic acid from octanoyl-acyl-carrier-protein onto the lipoyl domains of lipoate-dependent enzymes. Lipoyl-ACP can also act as a substrate although octanoyl-ACP is likely to be the physiological substrate. The sequence is that of Octanoyltransferase from Deinococcus radiodurans (strain ATCC 13939 / DSM 20539 / JCM 16871 / CCUG 27074 / LMG 4051 / NBRC 15346 / NCIMB 9279 / VKM B-1422 / R1).